A 2316-amino-acid chain; its full sequence is Receptor-type tyrosine-protein phosphatase zeta (2316 aa).

A signal peptide spans 1–24 (MRILQSFLACVQLLCVCRLDWAYG). The Extracellular segment spans residues 25–1637 (YYRQQRKLVE…LAEGLESEKK (1613 aa)). Residues 36–300 (IGWSYTGALN…KFSRQVFSSY (265 aa)) form the Alpha-carbonic anhydrase domain. Disulfide bonds link C56–C240 and C133–C264. N-linked (GlcNAc...) asparagine glycans are attached at residues N105, N134, N223, N232, N324, N381, and N497. The Fibronectin type-III domain occupies 314–413 (EPENVQADPE…LIVDMPTEDA (100 aa)). Disordered stretches follow at residues 433–499 (YGKG…LNTS) and 518–537 (LPSQ…TSAS). A glycan (N-linked (GlcNAc...) asparagine) is linked at N552. Phosphoserine occurs at positions 572 and 576. Disordered regions lie at residues 586–624 (KLDS…TPEA) and 636–720 (RNAL…EMPH). The span at 592–602 (DDSSGSSPASS) shows a compositional bias: low complexity. An O-linked (Xyl...) (chondroitin sulfate) serine glycan is attached at S595. Residues 603–621 (TVPFSTDNLSHGYTSSSDT) are compositionally biased toward polar residues. N610 is a glycosylation site (N-linked (GlcNAc...) asparagine). Phosphoserine; alternate is present on S645. A glycan (O-linked (Xyl...) (chondroitin sulfate) serine; alternate) is linked at S645. A Phosphoserine modification is found at S647. The span at 666–675 (TDLTTQSETG) shows a compositional bias: polar residues. N685 carries N-linked (GlcNAc...) asparagine glycosylation. Polar residues predominate over residues 699-711 (ETFSPDATASRGP). Residue N786 is glycosylated (N-linked (GlcNAc...) asparagine). A glycan (O-linked (Xyl...) (chondroitin sulfate) serine) is linked at S1005. Residues N1025 and N1058 are each glycosylated (N-linked (GlcNAc...) asparagine). Disordered stretches follow at residues 1141 to 1172 (QASG…SHPS), 1204 to 1228 (KTAL…SSSS), 1401 to 1521 (LLPS…DGRE), and 1545 to 1622 (TSDE…NSSH). Positions 1152–1172 (LSTNSEPALSDTASSEVSHPS) are enriched in polar residues. Residues 1401 to 1413 (LLPSKATSKPTHS) are compositionally biased toward polar residues. Residues 1425–1439 (EDGDDYDDDDYDDID) are compositionally biased toward acidic residues. N-linked (GlcNAc...) asparagine glycosylation is present at N1463. The span at 1464–1478 (DSDTQESSLVDQSDP) shows a compositional bias: polar residues. Residues S1550 and S1552 are each glycosylated (O-linked (Xyl...) (chondroitin sulfate) serine). Polar residues-rich tracts occupy residues 1555-1569 (GTSD…STDF) and 1595-1609 (PRSS…HSGV). The N-linked (GlcNAc...) asparagine glycan is linked to N1563. A compositionally biased stretch (low complexity) spans 1610–1621 (SNSSEAEASNSS). Residues N1611 and N1619 are each glycosylated (N-linked (GlcNAc...) asparagine). Residues 1638–1663 (AVIPLVIVSALTFICLVVLVGILIYW) traverse the membrane as a helical segment. At 1664–2316 (RKCFQTAHFY…NIAESLESLV (653 aa)) the chain is on the cytoplasmic side. Residues T1685 and T1688 each carry the phosphothreonine modification. 2 Tyrosine-protein phosphatase domains span residues 1718–1993 (FTEE…LVEA) and 2024–2283 (LEKQ…VLSL). Residues D1902, 1934–1940 (CSAGVGR), and Q1978 contribute to the substrate site. The Phosphocysteine intermediate role is filled by C1934. Position 2056 is a phosphoserine (S2056).

It belongs to the protein-tyrosine phosphatase family. Receptor class 5 subfamily. Interacts with tenascin. Interacts with N-CAM and NG-CAM. The carbonic-anhydrase like domain interacts with CNTN1 (contactin). Interacts with PTN. Interaction with PTN promotes formation of homooligomers; oligomerization impairs phosphatase activity. Interacts (via chondroitin sulfate chains) with MDK (via C-terminal); this interaction is inhibited by PTN; this interaction promotes neuronal migration. In terms of tissue distribution, nervous tissue specific.

The protein resides in the cell membrane. The protein localises to the secreted. The catalysed reaction is O-phospho-L-tyrosyl-[protein] + H2O = L-tyrosyl-[protein] + phosphate. Its function is as follows. Protein tyrosine phosphatase that negatively regulates oligodendrocyte precursor proliferation in the embryonic spinal cord. Required for normal differentiation of the precursor cells into mature, fully myelinating oligodendrocytes. May play a role in protecting oligondendrocytes against apoptosis. May play a role in the establishment of contextual memory, probably via the dephosphorylation of proteins that are part of important signaling cascades. In terms of biological role, isoform 3 (phosphacan), previously designated 3F8 chondroitin sulfate proteoglycan or 3H1 keratan sulfate proteoglycan depending on the glycosylation status, is a soluble nervous tissue-specific proteoglycan. It is synthesized by glia and binds to neurons and to the neural cell adhesion molecules tenascin, N-CAM or NG-CAM but not to laminin and fibronectin. Phosphacan acts as a potent inhibitor of cell adhesion and neurite outgrowth. The chain is Receptor-type tyrosine-protein phosphatase zeta (Ptprz1) from Rattus norvegicus (Rat).